Reading from the N-terminus, the 494-residue chain is Probable cytosol aminopeptidase (494 aa).

Mn(2+) contacts are provided by Lys260 and Asp265. Residue Lys272 is part of the active site. 3 residues coordinate Mn(2+): Asp283, Asp342, and Glu344. Residue Arg346 is part of the active site.

The protein belongs to the peptidase M17 family. Requires Mn(2+) as cofactor.

The protein resides in the cytoplasm. It catalyses the reaction Release of an N-terminal amino acid, Xaa-|-Yaa-, in which Xaa is preferably Leu, but may be other amino acids including Pro although not Arg or Lys, and Yaa may be Pro. Amino acid amides and methyl esters are also readily hydrolyzed, but rates on arylamides are exceedingly low.. The catalysed reaction is Release of an N-terminal amino acid, preferentially leucine, but not glutamic or aspartic acids.. Functionally, presumably involved in the processing and regular turnover of intracellular proteins. Catalyzes the removal of unsubstituted N-terminal amino acids from various peptides. This Bacillus anthracis (strain CDC 684 / NRRL 3495) protein is Probable cytosol aminopeptidase.